The primary structure comprises 155 residues: 6,7-dimethyl-8-ribityllumazine synthase (155 aa).

5-amino-6-(D-ribitylamino)uracil-binding positions include Phe24, 58-60, and 82-84; these read AFE and VII. A (2S)-2-hydroxy-3-oxobutyl phosphate-binding site is contributed by 87-88; that stretch reads ST. His90 serves as the catalytic Proton donor. Phe115 serves as a coordination point for 5-amino-6-(D-ribitylamino)uracil. Arg129 lines the (2S)-2-hydroxy-3-oxobutyl phosphate pocket.

It belongs to the DMRL synthase family.

It carries out the reaction (2S)-2-hydroxy-3-oxobutyl phosphate + 5-amino-6-(D-ribitylamino)uracil = 6,7-dimethyl-8-(1-D-ribityl)lumazine + phosphate + 2 H2O + H(+). Its pathway is cofactor biosynthesis; riboflavin biosynthesis; riboflavin from 2-hydroxy-3-oxobutyl phosphate and 5-amino-6-(D-ribitylamino)uracil: step 1/2. In terms of biological role, catalyzes the formation of 6,7-dimethyl-8-ribityllumazine by condensation of 5-amino-6-(D-ribitylamino)uracil with 3,4-dihydroxy-2-butanone 4-phosphate. This is the penultimate step in the biosynthesis of riboflavin. This is 6,7-dimethyl-8-ribityllumazine synthase from Chlorobium phaeobacteroides (strain DSM 266 / SMG 266 / 2430).